Here is a 237-residue protein sequence, read N- to C-terminus: MARRPTPPGTPETTGVGHVVDLVRASIPPLHPAGLPFVAVPLAVAVAAGKRKWVRRAGLATAAACAGFFRHPNRVPPNRPGVVVAPADGEIALVDTASPPAELGLGDQPLPRVSIFLSVLDVHVQRTPVSGVVREVRHQSGQFRSADLPEASAVNERNSMLLETQSGQQIVVVQIAGLLARRIVCDARVGDVLTIGDTYGLIRFGSRVDTYFPVGTELLVQPGQRTIGGETVLATLS.

Serine 206 serves as the catalytic Schiff-base intermediate with substrate; via pyruvic acid. Serine 206 is subject to Pyruvic acid (Ser); by autocatalysis.

This sequence belongs to the phosphatidylserine decarboxylase family. PSD-A subfamily. As to quaternary structure, heterodimer of a large membrane-associated beta subunit and a small pyruvoyl-containing alpha subunit. Pyruvate serves as cofactor. In terms of processing, is synthesized initially as an inactive proenzyme. Formation of the active enzyme involves a self-maturation process in which the active site pyruvoyl group is generated from an internal serine residue via an autocatalytic post-translational modification. Two non-identical subunits are generated from the proenzyme in this reaction, and the pyruvate is formed at the N-terminus of the alpha chain, which is derived from the carboxyl end of the proenzyme. The post-translation cleavage follows an unusual pathway, termed non-hydrolytic serinolysis, in which the side chain hydroxyl group of the serine supplies its oxygen atom to form the C-terminus of the beta chain, while the remainder of the serine residue undergoes an oxidative deamination to produce ammonia and the pyruvoyl prosthetic group on the alpha chain.

The protein resides in the cell membrane. The catalysed reaction is a 1,2-diacyl-sn-glycero-3-phospho-L-serine + H(+) = a 1,2-diacyl-sn-glycero-3-phosphoethanolamine + CO2. Its pathway is phospholipid metabolism; phosphatidylethanolamine biosynthesis; phosphatidylethanolamine from CDP-diacylglycerol: step 2/2. In terms of biological role, catalyzes the formation of phosphatidylethanolamine (PtdEtn) from phosphatidylserine (PtdSer). This chain is Phosphatidylserine decarboxylase proenzyme, found in Nocardia farcinica (strain IFM 10152).